We begin with the raw amino-acid sequence, 328 residues long: MIGILVSIAVTAIIFKYTESELTWSVIKRANWLLLIVAFLLQVSFWLLWALRMKLLSNYLGYRISFFHSLEITMASMFTASITPSSAGGEPVRVKMLSDRGVEVGTSAFIVLAERILDSMYFSTALPVFLIVTGFSTSFGFKIAIIFITLLLVFLYILYRIFRNESSIDKFAQLLYKAVRKFNEKKAEKYSSTFSRELRRFREATIKMLSDSPSGILVLYLVTLVMWSASFAIPSVILVALGYDAYFLYSYTAQLIIVIVSLVPLTPGSSGIAEVSMAYLYSNFVPTNVLGVLVGLWRLITYHTNIFFGAISVNYSLIKSKFVKNQLT.

Helical transmembrane passes span 31–51 (NWLLLIVAFLLQVSFWLLWAL), 116–136 (ILDSMYFSTALPVFLIVTGFS), 139–159 (FGFKIAIIFITLLLVFLYILY), 221–241 (LVTLVMWSASFAIPSVILVAL), 245–265 (AYFLYSYTAQLIIVIVSLVPL), and 277–297 (MAYLYSNFVPTNVLGVLVGLW).

Belongs to the UPF0104 family.

The protein resides in the cell membrane. The protein is UPF0104 membrane protein AF_2231 of Archaeoglobus fulgidus (strain ATCC 49558 / DSM 4304 / JCM 9628 / NBRC 100126 / VC-16).